Reading from the N-terminus, the 83-residue chain is Cardiotoxin 7'' (83 aa).

Residues 1-21 (MKTLLLTLVVVTIVCLDLGYT) form the signal peptide. Intrachain disulfides connect Cys-24-Cys-43, Cys-36-Cys-61, Cys-65-Cys-76, and Cys-77-Cys-82.

Belongs to the three-finger toxin family. Short-chain subfamily. Orphan group XV sub-subfamily. Expressed by the venom gland.

The protein resides in the secreted. Its subcellular location is the target cell membrane. Has low cytotoxic activity. This Naja atra (Chinese cobra) protein is Cardiotoxin 7''.